A 230-amino-acid polypeptide reads, in one-letter code: Cytochrome b6-f complex iron-sulfur subunit, chloroplastic (230 aa).

The transit peptide at 1 to 50 directs the protein to the chloroplast; it reads MSSTTLSPTTPSQLCSGKSGISCPSIALLVKPTRTQMTGRGNKGMKITCQ. A helical membrane pass occupies residues 72–92; it reads LLGALSLPTAGMLVPYGSFLV. The Rieske domain occupies 115-213; the sequence is ATEWLKTHAP…VGVEDGKVVF (99 aa). Residues C157, H159, C175, and H178 each contribute to the [2Fe-2S] cluster site. C162 and C177 are oxidised to a cystine.

The protein belongs to the Rieske iron-sulfur protein family. As to quaternary structure, the 4 large subunits of the cytochrome b6-f complex are cytochrome b6, subunit IV (17 kDa polypeptide, petD), cytochrome f and the Rieske protein, while the 4 small subunits are petG, petL, petM and petN. The complex functions as a dimer. Requires [2Fe-2S] cluster as cofactor.

The protein localises to the plastid. Its subcellular location is the chloroplast thylakoid membrane. It catalyses the reaction 2 oxidized [plastocyanin] + a plastoquinol + 2 H(+)(in) = 2 reduced [plastocyanin] + a plastoquinone + 4 H(+)(out). In terms of biological role, component of the cytochrome b6-f complex, which mediates electron transfer between photosystem II (PSII) and photosystem I (PSI), cyclic electron flow around PSI, and state transitions. The sequence is that of Cytochrome b6-f complex iron-sulfur subunit, chloroplastic (petC) from Pisum sativum (Garden pea).